The chain runs to 1096 residues: Adenylate-forming reductase Nps9 (1096 aa).

The interval Asp-39–Leu-352 is adenylation (A) domain. AMP contacts are provided by residues His-236, Val-339–Gln-340, Thr-344, and Ile-425–Arg-428. The Carrier domain maps to Glu-569–Ala-656. Ser-605 is subject to O-(pantetheine 4'-phosphoryl)serine. The segment at Leu-716–Ile-952 is reductase (R) domain. NADP(+)-binding positions include Thr-720–Leu-723, Ser-807–Trp-809, Tyr-880, and Lys-884.

Belongs to the adenylate-forming reductase family.

Adenylate-forming reductase, a natural product biosynthesis enzyme that resembles non-ribosomal peptide synthetases, yet serves to modify one substrate, rather than to condense two or more building blocks. The A-domain preferentially accepts L-threonine as substrate. The natural product of the enzyme is not yet known. The chain is Adenylate-forming reductase Nps9 from Serpula lacrymans var. lacrymans (strain S7.9) (Dry rot fungus).